Reading from the N-terminus, the 608-residue chain is Actin-interacting protein 1 (608 aa).

WD repeat units lie at residues 62–101, 106–149, 150–190, 193–232, 237–276, 323–362, 366–403, 444–483, 487–526, 531–570, and 575–607; these read EHSC…HLLK, PIAG…GEIS, GQSK…FKMT, DHSR…LVGE, AHKG…LVSE, GHNK…NDRI, GHGN…YTDY, PIKY…LEPK, DHLG…PAHN, FHSA…KHTI, and HPQS…HVEN.

This sequence belongs to the WD repeat AIP1 family. Expressed in pupal wing cells.

The protein resides in the cytoplasm. The protein localises to the cytoskeleton. In terms of biological role, induces disassembly of actin filaments in conjunction with ADF/cofilin family proteins. Together with GMF, promotes Arp2/3-nucleated actin filament array disassembly. Essential for organismal and cell viability. Required for the development of normal wing cell planar polarity. In egg chambers and together with GMF, plays an important role in directional migration of border cell clusters. This is Actin-interacting protein 1 (flr) from Drosophila melanogaster (Fruit fly).